The following is a 201-amino-acid chain: Recombination protein RecR (201 aa).

The C4-type zinc finger occupies 57-72 (CADCRTFTEQEKCNIC). One can recognise a Toprim domain in the interval 81 to 176 (GQICVVESPA…DASRIAHGVP (96 aa)).

Belongs to the RecR family.

In terms of biological role, may play a role in DNA repair. It seems to be involved in an RecBC-independent recombinational process of DNA repair. It may act with RecF and RecO. The polypeptide is Recombination protein RecR (Cronobacter sakazakii (strain ATCC BAA-894) (Enterobacter sakazakii)).